The chain runs to 338 residues: Aspartate--ammonia ligase (338 aa).

It belongs to the class-II aminoacyl-tRNA synthetase family. AsnA subfamily.

The protein resides in the cytoplasm. It catalyses the reaction L-aspartate + NH4(+) + ATP = L-asparagine + AMP + diphosphate + H(+). The protein operates within amino-acid biosynthesis; L-asparagine biosynthesis; L-asparagine from L-aspartate (ammonia route): step 1/1. The sequence is that of Aspartate--ammonia ligase from Lactobacillus delbrueckii subsp. bulgaricus (strain ATCC 11842 / DSM 20081 / BCRC 10696 / JCM 1002 / NBRC 13953 / NCIMB 11778 / NCTC 12712 / WDCM 00102 / Lb 14).